The primary structure comprises 90 residues: Barrier-to-autointegration factor B (90 aa).

Belongs to the BAF family. In terms of assembly, homodimer. Interacts with nemp1a and nemp1b.

The protein localises to the nucleus. Its subcellular location is the chromosome. It localises to the nucleus envelope. The protein resides in the cytoplasm. Non-specific DNA-binding protein that plays key roles in mitotic nuclear reassembly, chromatin organization, DNA damage response, gene expression and intrinsic immunity against foreign DNA. Contains two non-specific double-stranded DNA (dsDNA)-binding sites which promote DNA cross-bridging. Plays a key role in nuclear membrane reformation at the end of mitosis by driving formation of a single nucleus in a spindle-independent manner. Transiently cross-bridges anaphase chromosomes via its ability to bridge distant DNA sites, leading to the formation of a dense chromatin network at the chromosome ensemble surface that limits membranes to the surface. Also acts as a negative regulator of innate immune activation by restricting CGAS activity toward self-DNA upon acute loss of nuclear membrane integrity. Outcompetes CGAS for DNA-binding, thereby preventing CGAS activation and subsequent damaging autoinflammatory responses. Also involved in DNA damage response; acts by inhibiting the ADP-ribosyltransferase activity of PARP1. Involved in the recognition of exogenous dsDNA in the cytosol: associates with exogenous dsDNA immediately after its appearance in the cytosol at endosome breakdown and is required to avoid autophagy. This Xenopus laevis (African clawed frog) protein is Barrier-to-autointegration factor B (banf1-b).